Consider the following 508-residue polypeptide: MAP kinase kinase MKK1/SSP32 (508 aa).

3 disordered regions span residues 1-21, 35-95, and 130-158; these read MASLFRPPESAKCNPNSPRLK, IYLT…LSIN, and ELSGNSDLTPSSMASPFSHTNTSSPYLRN. Residues 35 to 47 are compositionally biased toward polar residues; the sequence is IYLTSNGSSTTAY. Residues 48-66 are compositionally biased toward low complexity; the sequence is SSHTPEPLTSSTSTLFSQT. 2 stretches are compositionally biased toward polar residues: residues 67–79 and 131–158; these read RLHPSDSSMTLNT and LSGNSDLTPSSMASPFSHTNTSSPYLRN. The residue at position 192 (Ser192) is a Phosphoserine. Residues 221–488 form the Protein kinase domain; it reads IETLGILGEG…PRQMINHPWI (268 aa). ATP is bound by residues 227-235 and Lys250; that span reads LGEGAGGSV. Asp349 (proton acceptor) is an active-site residue.

Belongs to the protein kinase superfamily. STE Ser/Thr protein kinase family. MAP kinase kinase subfamily.

The catalysed reaction is L-seryl-[protein] + ATP = O-phospho-L-seryl-[protein] + ADP + H(+). The enzyme catalyses L-threonyl-[protein] + ATP = O-phospho-L-threonyl-[protein] + ADP + H(+). It catalyses the reaction L-tyrosyl-[protein] + ATP = O-phospho-L-tyrosyl-[protein] + ADP + H(+). In terms of biological role, involved in a signal transduction pathway that play a role in yeast cell morphogenesis and cell growth. This pathway seems to start by SMP3; then involve the kinase PKC1 that may act on the BCK1 kinase that then phosphorylates MKK1 and MKK2 which themselves phosphorylate the MPK1 kinase. This Saccharomyces cerevisiae (strain ATCC 204508 / S288c) (Baker's yeast) protein is MAP kinase kinase MKK1/SSP32 (MKK1).